The following is a 100-amino-acid chain: Nucleoid-associated protein MYPU_0500 (100 aa).

This sequence belongs to the YbaB/EbfC family. As to quaternary structure, homodimer.

The protein resides in the cytoplasm. It localises to the nucleoid. Binds to DNA and alters its conformation. May be involved in regulation of gene expression, nucleoid organization and DNA protection. The chain is Nucleoid-associated protein MYPU_0500 from Mycoplasmopsis pulmonis (strain UAB CTIP) (Mycoplasma pulmonis).